The chain runs to 319 residues: uncharacterized protein (319 aa).

The disordered stretch occupies residues 21–70 (ETETLKNSTDEVQTSSSFSSSGGRQSSPLTSGSKLEREKQTPSLEQGDTQ). Polar residues predominate over residues 25-34 (LKNSTDEVQT). Positions 35–51 (SSSFSSSGGRQSSPLTS) are enriched in low complexity. Residues 61-70 (TPSLEQGDTQ) show a composition bias toward polar residues.

This is an uncharacterized protein from Homo sapiens (Human).